Here is a 275-residue protein sequence, read N- to C-terminus: Large ribosomal subunit protein uL2 (275 aa).

Disordered stretches follow at residues methionine 1–glycine 55 and proline 218–arginine 275. The span at threonine 259 to arginine 275 shows a compositional bias: basic residues.

This sequence belongs to the universal ribosomal protein uL2 family. Part of the 50S ribosomal subunit. Forms a bridge to the 30S subunit in the 70S ribosome.

In terms of biological role, one of the primary rRNA binding proteins. Required for association of the 30S and 50S subunits to form the 70S ribosome, for tRNA binding and peptide bond formation. It has been suggested to have peptidyltransferase activity; this is somewhat controversial. Makes several contacts with the 16S rRNA in the 70S ribosome. This Crocosphaera subtropica (strain ATCC 51142 / BH68) (Cyanothece sp. (strain ATCC 51142)) protein is Large ribosomal subunit protein uL2.